The primary structure comprises 1868 residues: Protein TIC 214 (1868 aa).

The next 6 membrane-spanning stretches (helical) occupy residues L11–F31, F64–L84, P87–N107, L126–L146, I166–S186, and I221–I241. The segment covering E248–E276 has biased composition (basic and acidic residues). Disordered regions lie at residues E248 to Q277, F617 to S643, D658 to E700, T782 to E806, and Y1537 to K1607. Over residues F617–T636 the composition is skewed to acidic residues. Positions A674 to S683 are enriched in polar residues. 3 stretches are compositionally biased toward basic and acidic residues: residues D684–E700, G789–E806, and Y1537–H1576.

The protein belongs to the TIC214 family. Part of the Tic complex.

Its subcellular location is the plastid. The protein localises to the chloroplast inner membrane. Its function is as follows. Involved in protein precursor import into chloroplasts. May be part of an intermediate translocation complex acting as a protein-conducting channel at the inner envelope. This is Protein TIC 214 from Nuphar advena (Common spatterdock).